The sequence spans 364 residues: 3-isopropylmalate dehydrogenase (364 aa).

G78–E91 contributes to the NAD(+) binding site. Substrate-binding residues include R99, R109, R138, and D228. The Mg(2+) site is built by D228, D252, and D256. G286–N298 contributes to the NAD(+) binding site.

This sequence belongs to the isocitrate and isopropylmalate dehydrogenases family. LeuB type 1 subfamily. As to quaternary structure, homodimer. Mg(2+) is required as a cofactor. Requires Mn(2+) as cofactor.

It is found in the cytoplasm. It catalyses the reaction (2R,3S)-3-isopropylmalate + NAD(+) = 4-methyl-2-oxopentanoate + CO2 + NADH. The protein operates within amino-acid biosynthesis; L-leucine biosynthesis; L-leucine from 3-methyl-2-oxobutanoate: step 3/4. Functionally, catalyzes the oxidation of 3-carboxy-2-hydroxy-4-methylpentanoate (3-isopropylmalate) to 3-carboxy-4-methyl-2-oxopentanoate. The product decarboxylates to 4-methyl-2 oxopentanoate. The sequence is that of 3-isopropylmalate dehydrogenase from Buchnera aphidicola subsp. Uroleucon obscurum.